The chain runs to 515 residues: 2,3-bisphosphoglycerate-independent phosphoglycerate mutase (515 aa).

D14 and S64 together coordinate Mn(2+). The active-site Phosphoserine intermediate is S64. Substrate contacts are provided by residues H125, 155–156 (RD), R187, R193, 263–266 (RADR), and K337. Mn(2+)-binding residues include D404, H408, D445, H446, and H464.

It belongs to the BPG-independent phosphoglycerate mutase family. In terms of assembly, monomer. Requires Mn(2+) as cofactor.

The enzyme catalyses (2R)-2-phosphoglycerate = (2R)-3-phosphoglycerate. The protein operates within carbohydrate degradation; glycolysis; pyruvate from D-glyceraldehyde 3-phosphate: step 3/5. Functionally, catalyzes the interconversion of 2-phosphoglycerate and 3-phosphoglycerate. The chain is 2,3-bisphosphoglycerate-independent phosphoglycerate mutase from Pseudomonas aeruginosa (strain UCBPP-PA14).